Consider the following 226-residue polypeptide: Ribonuclease 3 (226 aa).

An RNase III domain is found at 7–129 (LARLSRTLGY…IIGAVYLDAN (123 aa)). Glu-42 provides a ligand contact to Mg(2+). Residue Asp-46 is part of the active site. Residues Asp-115 and Glu-118 each contribute to the Mg(2+) site. The active site involves Glu-118. A DRBM domain is found at 156 to 226 (DPKTILQEYL…AAQILELINK (71 aa)).

This sequence belongs to the ribonuclease III family. In terms of assembly, homodimer. The cofactor is Mg(2+).

The protein resides in the cytoplasm. It catalyses the reaction Endonucleolytic cleavage to 5'-phosphomonoester.. Its function is as follows. Digests double-stranded RNA. Involved in the processing of primary rRNA transcript to yield the immediate precursors to the large and small rRNAs (23S and 16S). Processes some mRNAs, and tRNAs when they are encoded in the rRNA operon. Processes pre-crRNA and tracrRNA of type II CRISPR loci if present in the organism. This is Ribonuclease 3 from Shewanella denitrificans (strain OS217 / ATCC BAA-1090 / DSM 15013).